A 218-amino-acid polypeptide reads, in one-letter code: Probable nicotinate-nucleotide adenylyltransferase (218 aa).

It belongs to the NadD family.

The catalysed reaction is nicotinate beta-D-ribonucleotide + ATP + H(+) = deamido-NAD(+) + diphosphate. The protein operates within cofactor biosynthesis; NAD(+) biosynthesis; deamido-NAD(+) from nicotinate D-ribonucleotide: step 1/1. Its function is as follows. Catalyzes the reversible adenylation of nicotinate mononucleotide (NaMN) to nicotinic acid adenine dinucleotide (NaAD). This Burkholderia lata (strain ATCC 17760 / DSM 23089 / LMG 22485 / NCIMB 9086 / R18194 / 383) protein is Probable nicotinate-nucleotide adenylyltransferase.